The primary structure comprises 814 residues: Acyl-coenzyme A dehydrogenase (814 aa).

Glutamate 497 serves as the catalytic Proton acceptor.

Belongs to the acyl-CoA dehydrogenase family. Requires FAD as cofactor.

It catalyses the reaction a medium-chain 2,3-saturated fatty acyl-CoA + oxidized [electron-transfer flavoprotein] + H(+) = a medium-chain (2E)-enoyl-CoA + reduced [electron-transfer flavoprotein]. The enzyme catalyses a long-chain 2,3-saturated fatty acyl-CoA + oxidized [electron-transfer flavoprotein] + H(+) = a long-chain (2E)-enoyl-CoA + reduced [electron-transfer flavoprotein]. Its pathway is lipid metabolism; fatty acid beta-oxidation. In terms of biological role, catalyzes the dehydrogenation of acyl-coenzymes A (acyl-CoAs) to 2-enoyl-CoAs, the first step of the beta-oxidation cycle of fatty acid degradation. Is required for E.coli to utilize dodecanoate or oleate as the sole carbon and energy source for growth. This chain is Acyl-coenzyme A dehydrogenase, found in Escherichia coli (strain K12).